Consider the following 215-residue polypeptide: Ribonuclease HII (215 aa).

Residues 19 to 214 enclose the RNase H type-2 domain; it reads KNVIGVDEAG…KILETEEEKT (196 aa). Residues Asp-25, Glu-26, and Asp-121 each contribute to the a divalent metal cation site.

Belongs to the RNase HII family. Mn(2+) is required as a cofactor. Requires Mg(2+) as cofactor.

The protein localises to the cytoplasm. It carries out the reaction Endonucleolytic cleavage to 5'-phosphomonoester.. In terms of biological role, endonuclease that specifically degrades the RNA of RNA-DNA hybrids. In Fusobacterium nucleatum subsp. nucleatum (strain ATCC 25586 / DSM 15643 / BCRC 10681 / CIP 101130 / JCM 8532 / KCTC 2640 / LMG 13131 / VPI 4355), this protein is Ribonuclease HII.